A 491-amino-acid chain; its full sequence is Katanin p60 ATPase-containing subunit A1 (491 aa).

Residues 1 to 29 (MSLLMISENVKLAREYALLGNYDSAMVYY) are interaction with KATNB1. Residues 1-75 (MSLLMISENV…VKDIMKTLES (75 aa)) form an interaction with dynein and NDEL1 region. Residues 1 to 185 (MSLLMISENV…EPETNKFDST (185 aa)) form an interaction with microtubules region. Phosphoserine; by DYRK2 occurs at positions 42 and 109. A disordered region spans residues 87–185 (QHDLPASEGE…EPETNKFDST (99 aa)). Polar residues predominate over residues 117 to 144 (SSQYSDPKSHGNRPSTTVRVHRSSAQNV). At Thr133 the chain carries Phosphothreonine; by DYRK2. The segment covering 145–169 (HNDRGKAVRCREKKEQNKGREEKNK) has biased composition (basic and acidic residues). Ser170 bears the Phosphoserine mark. Residue 249–256 (GPPGTGKT) coordinates ATP.

Belongs to the AAA ATPase family. Katanin p60 subunit A1 subfamily. Can homooligomerize into hexameric rings, which may be promoted by interaction with microtubules. Interacts with KATNB1, which may serve as a targeting subunit. Interacts with ASPM; the katanin complex formation KATNA1:KATNB1 is required for the association of ASPM. Interacts with dynein and NDEL1. Associates with the E3 ligase complex containing DYRK2, EDD/UBR5, DDB1 and DCAF1 proteins (EDVP complex). Interacts with KLHL42 (via the kelch domains). Interacts with CUL3; the interaction is enhanced by KLHL42. Interacts with KATNB1 and KATNBL1. Interacts with CAMSAP2 and CAMSAP3; leading to regulate the length of CAMSAP-decorated microtubule stretches. Phosphorylation by DYRK2 triggers ubiquitination and subsequent degradation. In terms of processing, ubiquitinated by the BCR(KLHL42) E3 ubiquitin ligase complex, leading to its proteasomal degradation. Ubiquitinated by the EDVP E3 ligase complex and subsequently targeted for proteasomal degradation.

The protein resides in the cytoplasm. It localises to the midbody. Its subcellular location is the cytoskeleton. It is found in the microtubule organizing center. The protein localises to the centrosome. The protein resides in the spindle pole. It localises to the spindle. The catalysed reaction is n ATP + n H2O + a microtubule = n ADP + n phosphate + (n+1) alpha/beta tubulin heterodimers.. ATPase activity is stimulated by microtubules, which promote homooligomerization. ATP-dependent microtubule severing is stimulated by interaction with KATNB1. Catalytic subunit of a complex which severs microtubules in an ATP-dependent manner. Microtubule severing may promote rapid reorganization of cellular microtubule arrays and the release of microtubules from the centrosome following nucleation. Microtubule release from the mitotic spindle poles may allow depolymerization of the microtubule end proximal to the spindle pole, leading to poleward microtubule flux and poleward motion of chromosome. Microtubule release within the cell body of neurons may be required for their transport into neuronal processes by microtubule-dependent motor proteins. This transport is required for axonal growth. This is Katanin p60 ATPase-containing subunit A1 from Homo sapiens (Human).